The sequence spans 256 residues: 1-(5-phosphoribosyl)-5-[(5-phosphoribosylamino)methylideneamino] imidazole-4-carboxamide isomerase (256 aa).

Catalysis depends on Asp-8, which acts as the Proton acceptor. Catalysis depends on Asp-130, which acts as the Proton donor.

It belongs to the HisA/HisF family.

The protein localises to the cytoplasm. It catalyses the reaction 1-(5-phospho-beta-D-ribosyl)-5-[(5-phospho-beta-D-ribosylamino)methylideneamino]imidazole-4-carboxamide = 5-[(5-phospho-1-deoxy-D-ribulos-1-ylimino)methylamino]-1-(5-phospho-beta-D-ribosyl)imidazole-4-carboxamide. The protein operates within amino-acid biosynthesis; L-histidine biosynthesis; L-histidine from 5-phospho-alpha-D-ribose 1-diphosphate: step 4/9. The chain is 1-(5-phosphoribosyl)-5-[(5-phosphoribosylamino)methylideneamino] imidazole-4-carboxamide isomerase from Chlorobium luteolum (strain DSM 273 / BCRC 81028 / 2530) (Pelodictyon luteolum).